A 267-amino-acid polypeptide reads, in one-letter code: Putative phosphoenolpyruvate synthase regulatory protein (267 aa).

Residue 147 to 154 (GVSRSGKT) participates in ADP binding.

The protein belongs to the pyruvate, phosphate/water dikinase regulatory protein family. PSRP subfamily.

It catalyses the reaction [pyruvate, water dikinase] + ADP = [pyruvate, water dikinase]-phosphate + AMP + H(+). The enzyme catalyses [pyruvate, water dikinase]-phosphate + phosphate + H(+) = [pyruvate, water dikinase] + diphosphate. Functionally, bifunctional serine/threonine kinase and phosphorylase involved in the regulation of the phosphoenolpyruvate synthase (PEPS) by catalyzing its phosphorylation/dephosphorylation. In Cupriavidus necator (strain ATCC 17699 / DSM 428 / KCTC 22496 / NCIMB 10442 / H16 / Stanier 337) (Ralstonia eutropha), this protein is Putative phosphoenolpyruvate synthase regulatory protein.